The primary structure comprises 43 residues: Large ribosomal subunit protein bL32 (43 aa).

This sequence belongs to the bacterial ribosomal protein bL32 family.

The protein is Large ribosomal subunit protein bL32 (rpmF) of Carsonella ruddii (strain PV).